The primary structure comprises 1147 residues: MSLRFIYGRAGSGKSQYCLNSIKKRIEEDIDRPLILLVPEQFSFQAEKNLIEVLDEKTGFKTQVLSFKRMAYRVFNEVGGITAKHMNESGKSMLLYNIIEDNKNNLKVFKKAAKRQGFITTISDIITEFKRYNITPEIILNNLENIEEDNLKYKMEDLALIFSQFETRLHKNYIDNEDDLTILVEKLNKSKQFDNAEIWIDEFSSFSPQEYSVLEKLLLKSYRINITLCTDYLNQGRFVDTTDVFSPIKNTENKLLQIIEDNNIKLDKPIALNCDPCARFKNSIELQHLEKNMFSFPYKEYKNETKDICMLKTLNQFTEIENTAKDIIKLCRDKGCRFKDIAVITGDLEGYENIISSVFLQYNIPFFIDKKREINNNPIIVLILSALEVLSKNWTYESVFRYLKTGLLDINNEEMDILENYVLANGIKGYQWTNDKPWEHKSFSNYELEDQVEKELLAKINDIRYKAMEPIISLNKNLKNKERAKEFCEVLYEFLCSINLPDKIQNMIEDFRAEGEVEKASEYNQIWNIVMEVLDQIVEAIGGEKISLKEFFKILQTGFSEYEIGLIPPTLDQVIVGSITRLRSHNINILYIVGVNDGIFPAPLKEEGILSDDDRQFLGDKGLEIAKDTKSIAFEEQFLVYSTLTTPSKYLRLSYPIADGEGKTLRPSIIISRIKKIFTNICEENDIVKLNGEEEELKNISSAKPTFNYLISNLRKDIEGVKIDNIWGDIYKWYFENEFWIEKLNRLVKGFDYTNQSKYIETKKIRNLYGKPLKISVSRVEKFSQCPFAYFVQYGLKAKDRKIFNLSYPDLGIFMHSILEKFSHELEKKGIDWDTMDLNWAEEEIDKLINEELDNKSLDILNSSKRYEYVTKSVKKILKRSIWLIGEHIKRGNFKPSYYELSFDIDGDYPPIAMELHSGEVVNLIGRVDRVDLLQKDGATYLKIIDYKSGTKEFKLSDVYYGLQLQLLIYLDAILTELAERFGIDGEPGALLYLKLDDPIVKNIVDMSDKEIEKSIIKNLKMKGLILNDPNIIKDMDNIISGISDIIPVMVKKDGGVSEGRSSVATKEEFETLRKYVRYTIIEICEEMLEGNIEIKPYKKKDGSSCDYCIYSSVCKFDTEIRGNKYNILIDKKDEEVWEAIKKKLEC.

8-15 (GRAGSGKS) lines the ATP pocket. 4 residues coordinate [4Fe-4S] cluster: cysteine 786, cysteine 1106, cysteine 1109, and cysteine 1115.

It belongs to the helicase family. AddB/RexB type 1 subfamily. Heterodimer of AddA and AddB. Mg(2+) serves as cofactor. It depends on [4Fe-4S] cluster as a cofactor.

Its function is as follows. The heterodimer acts as both an ATP-dependent DNA helicase and an ATP-dependent, dual-direction single-stranded exonuclease. Recognizes the chi site generating a DNA molecule suitable for the initiation of homologous recombination. The AddB subunit has 5' -&gt; 3' nuclease activity but not helicase activity. The chain is ATP-dependent helicase/deoxyribonuclease subunit B from Clostridium botulinum (strain Loch Maree / Type A3).